The primary structure comprises 281 residues: Protein-S-isoprenylcysteine O-methyltransferase (281 aa).

Residues Met1–Leu2 are Cytoplasmic-facing. A helical transmembrane segment spans residues Ser3 to Tyr29. Residues Tyr30–Leu35 are Lumenal-facing. The chain crosses the membrane as a helical span at residues Val36–Leu53. Residues Lys54–Asn58 lie on the Cytoplasmic side of the membrane. The helical transmembrane segment at Glu59–Ala85 threads the bilayer. Over Pro86 to Asn88 the chain is Lumenal. A helical transmembrane segment spans residues Ile89 to Val113. Residues Gln114–Val118 lie on the Cytoplasmic side of the membrane. The helical transmembrane segment at Ser119–Phe149 threads the bilayer. Topologically, residues Pro150–Ile155 are lumenal. The chain crosses the membrane as a helical span at residues His156 to Gly181. Topologically, residues Ser182–Arg208 are cytoplasmic. Residues Gln189, His196 to Val199, Tyr204, and His209 to Tyr212 contribute to the S-adenosyl-L-methionine site. Residues His209–Leu226 form a helical membrane-spanning segment. Residues Ile227–Pro229 lie on the Lumenal side of the membrane. The chain crosses the membrane as a helical span at residues Leu230–Phe243. Over Lys244–Ile281 the chain is Cytoplasmic. Arg246 is a substrate binding site. An S-adenosyl-L-methionine-binding site is contributed by Glu250.

This sequence belongs to the class VI-like SAM-binding methyltransferase superfamily. Isoprenylcysteine carboxyl methyltransferase family.

It is found in the endoplasmic reticulum membrane. The catalysed reaction is [protein]-C-terminal S-[(2E,6E)-farnesyl]-L-cysteine + S-adenosyl-L-methionine = [protein]-C-terminal S-[(2E,6E)-farnesyl]-L-cysteine methyl ester + S-adenosyl-L-homocysteine. Functionally, catalyzes the post-translational methylation of isoprenylated C-terminal cysteine residues. In Tribolium castaneum (Red flour beetle), this protein is Protein-S-isoprenylcysteine O-methyltransferase.